Consider the following 70-residue polypeptide: Chondroitin proteoglycan 9 (70 aa).

The N-terminal stretch at 1-19 is a signal peptide; the sequence is MNFWHLLLLAVLFFVTVFG. Ser-25 and Ser-27 each carry an O-linked (Xyl...) (chondroitin sulfate) serine glycan.

This chain is Chondroitin proteoglycan 9 (cpg-9), found in Caenorhabditis briggsae.